A 186-amino-acid polypeptide reads, in one-letter code: dCTP deaminase (186 aa).

Residue 107–112 (KSTYAR) coordinates dCTP. Residue glutamate 133 is the Proton donor/acceptor of the active site. Positions 152, 166, and 176 each coordinate dCTP.

This sequence belongs to the dCTP deaminase family. As to quaternary structure, homotrimer.

The enzyme catalyses dCTP + H2O + H(+) = dUTP + NH4(+). Its pathway is pyrimidine metabolism; dUMP biosynthesis; dUMP from dCTP (dUTP route): step 1/2. Its function is as follows. Catalyzes the deamination of dCTP to dUTP. In Campylobacter concisus (strain 13826), this protein is dCTP deaminase.